Consider the following 92-residue polypeptide: Small ribosomal subunit protein uS19 (92 aa).

The protein belongs to the universal ribosomal protein uS19 family.

In terms of biological role, protein S19 forms a complex with S13 that binds strongly to the 16S ribosomal RNA. This is Small ribosomal subunit protein uS19 from Caulobacter sp. (strain K31).